The sequence spans 540 residues: V-set and immunoglobulin domain-containing protein 10 (540 aa).

An N-terminal signal peptide occupies residues Met-1–Ala-30. 4 consecutive Ig-like C2-type domains span residues Val-31–Val-119, Pro-123–Thr-215, Pro-223–Arg-309, and Pro-311–Ser-404. Topologically, residues Val-31–Gly-413 are extracellular. 8 N-linked (GlcNAc...) asparagine glycosylation sites follow: Asn-39, Asn-46, Asn-70, Asn-108, Asn-138, Asn-171, Asn-180, and Asn-198. A disulfide bond links Cys-44 and Cys-103. Intrachain disulfides connect Cys-153-Cys-201 and Cys-245-Cys-290. A glycan (N-linked (GlcNAc...) asparagine) is linked at Asn-326. A disulfide bridge connects residues Cys-331 and Cys-388. Residues Ile-414–Leu-434 traverse the membrane as a helical segment. Topologically, residues His-435–Val-540 are cytoplasmic. Residues Asp-461 to Ala-477 are compositionally biased toward acidic residues. Disordered stretches follow at residues Asp-461 to Ile-500 and Gln-513 to Val-540. Residues Glu-482–Ile-500 show a composition bias toward basic and acidic residues. Over residues Leu-521–Gln-534 the composition is skewed to acidic residues.

Its subcellular location is the membrane. In Homo sapiens (Human), this protein is V-set and immunoglobulin domain-containing protein 10 (VSIG10).